A 172-amino-acid chain; its full sequence is Protein-export protein SecB (172 aa).

A disordered region spans residues M1 to S22. Residues A7–D20 are compositionally biased toward polar residues.

It belongs to the SecB family. As to quaternary structure, homotetramer, a dimer of dimers. One homotetramer interacts with 1 SecA dimer.

The protein resides in the cytoplasm. In terms of biological role, one of the proteins required for the normal export of preproteins out of the cell cytoplasm. It is a molecular chaperone that binds to a subset of precursor proteins, maintaining them in a translocation-competent state. It also specifically binds to its receptor SecA. This is Protein-export protein SecB from Sphingopyxis alaskensis (strain DSM 13593 / LMG 18877 / RB2256) (Sphingomonas alaskensis).